A 661-amino-acid polypeptide reads, in one-letter code: MNNFSIISEYKPAGDQPKAIDEIIAGLSSKKRSQMLLGITGSGKTFTMANIIERTNRPTLIMAHNKTLAAQIYSEMKSLFPKNAVEYFVSYYDYYQPEAYIARTDTFIEKDSSINEQIDLMRHAATRSLLERRDVIVVSSVSCIYGLGSPDLYYQMMVNLEPGQSYLRDQLLNDLINLQYERNDIGFERGCFRVKGDNIDIFPSHYSDKAWRLSFFGNELEYIHEFDPLTGEKLAKLDKAMVFGNSHFVMPQETVNNAISGIEEELQKRLEFLKSQDKPLETQRLNQRTQYDLEMLTETGSCKGVENYSRFFTGRHAGEPPPTLFEYLPEDALLFVDESHVSVPQIRAMYNGDRARKKVLVEHGFRLPSALDNRPLKFEEWDKFRPQTVFVSATPGPFELEETGGTVVELIIRPTGLLDPECIIKPATNQVEDLISEIQTTIAQGFRVLVTTLTKKMAEDLTAYLQELKYKTSYLHSNVHTLERIEILRDLRQGTIDVLVGINLLREGLDIPECGLVAILDADKEGFLRSEVSLIQTIGRAARNSAGRVILYADKMTKSIDKAVSETLRRRQIQQEYNEKHGIIPKTINRAIHALAEFEKIDSKLDKKQAHTLFDNPAKLKTHIDKLKKEMLKAASNLEFEQAVKLRDQLKTLEAAALELS.

The region spanning 25–182 (AGLSSKKRSQ…NDLINLQYER (158 aa)) is the Helicase ATP-binding domain. An ATP-binding site is contributed by 38–45 (GITGSGKT). The short motif at 91–114 (YYDYYQPEAYIARTDTFIEKDSSI) is the Beta-hairpin element. A Helicase C-terminal domain is found at 430-592 (QVEDLISEIQ…IIPKTINRAI (163 aa)). Residues 621-656 (KTHIDKLKKEMLKAASNLEFEQAVKLRDQLKTLEAA) form the UVR domain.

The protein belongs to the UvrB family. As to quaternary structure, forms a heterotetramer with UvrA during the search for lesions. Interacts with UvrC in an incision complex.

It localises to the cytoplasm. In terms of biological role, the UvrABC repair system catalyzes the recognition and processing of DNA lesions. A damage recognition complex composed of 2 UvrA and 2 UvrB subunits scans DNA for abnormalities. Upon binding of the UvrA(2)B(2) complex to a putative damaged site, the DNA wraps around one UvrB monomer. DNA wrap is dependent on ATP binding by UvrB and probably causes local melting of the DNA helix, facilitating insertion of UvrB beta-hairpin between the DNA strands. Then UvrB probes one DNA strand for the presence of a lesion. If a lesion is found the UvrA subunits dissociate and the UvrB-DNA preincision complex is formed. This complex is subsequently bound by UvrC and the second UvrB is released. If no lesion is found, the DNA wraps around the other UvrB subunit that will check the other stand for damage. In Rickettsia peacockii (strain Rustic), this protein is UvrABC system protein B.